Reading from the N-terminus, the 175-residue chain is Myosin regulatory light chain 2, atrial isoform (175 aa).

An N-acetylalanine modification is found at Ala2. Phosphoserine is present on residues Ser22 and Ser23. EF-hand domains are found at residues 32-67 (AQIQEFKEAFSCIDQNRDGIICKSDLRETYSQLGKV), 102-137 (DPEEAILSAFRLFDPSGKGVVNKDQFKQLLLTQADK), and 138-173 (FSPAEVEQMFALTPMDLAGNIDYKSLCYIITHGDEK). Ca(2+)-binding residues include Asp45, Asn47, Asp49, and Asp56.

As to quaternary structure, myosin is a hexamer of 2 heavy chains and 4 light chains.

This Sus scrofa (Pig) protein is Myosin regulatory light chain 2, atrial isoform (MYL7).